The chain runs to 171 residues: Urease accessory protein UreE (171 aa).

The disordered stretch occupies residues serine 143 to glutamate 171. Residues histidine 152 to glutamate 171 show a composition bias toward basic and acidic residues.

This sequence belongs to the UreE family.

Its subcellular location is the cytoplasm. In terms of biological role, involved in urease metallocenter assembly. Binds nickel. Probably functions as a nickel donor during metallocenter assembly. The sequence is that of Urease accessory protein UreE from Brucella abortus biovar 1 (strain 9-941).